The sequence spans 1202 residues: Caffeine-induced protein 16 (1202 aa).

The 55-residue stretch at 1105-1159 (NIALLLRGFFCYYGLTTQYSFDWEAYMIDISSSQLKRKSTEFKDCPFVVLDPFLK) folds into the PAP-associated domain.

This is Caffeine-induced protein 16 (cid16) from Schizosaccharomyces pombe (strain 972 / ATCC 24843) (Fission yeast).